A 252-amino-acid polypeptide reads, in one-letter code: Chitooligosaccharide deacetylase (252 aa).

Residues histidine 61 and histidine 125 each coordinate Mg(2+).

This sequence belongs to the YdjC deacetylase family. ChbG subfamily. Homodimer. Mg(2+) is required as a cofactor.

It localises to the cytoplasm. It catalyses the reaction N,N'-diacetylchitobiose + H2O = N-acetyl-beta-D-glucosaminyl-(1-&gt;4)-D-glucosamine + acetate. The enzyme catalyses diacetylchitobiose-6'-phosphate + H2O = N'-monoacetylchitobiose-6'-phosphate + acetate. The protein operates within glycan degradation; chitin degradation. Functionally, involved in the degradation of chitin. ChbG is essential for growth on the acetylated chitooligosaccharides chitobiose and chitotriose but is dispensable for growth on cellobiose and chitosan dimer, the deacetylated form of chitobiose. Deacetylation of chitobiose-6-P and chitotriose-6-P is necessary for both the activation of the chb promoter by the regulatory protein ChbR and the hydrolysis of phosphorylated beta-glucosides by the phospho-beta-glucosidase ChbF. Catalyzes the removal of only one acetyl group from chitobiose-6-P to yield monoacetylchitobiose-6-P, the inducer of ChbR and the substrate of ChbF. This Salmonella schwarzengrund (strain CVM19633) protein is Chitooligosaccharide deacetylase.